Reading from the N-terminus, the 189-residue chain is Large ribosomal subunit protein bL9 (189 aa).

It belongs to the bacterial ribosomal protein bL9 family.

In terms of biological role, binds to the 23S rRNA. The sequence is that of Large ribosomal subunit protein bL9 from Brucella abortus (strain S19).